The sequence spans 523 residues: Probable FAD synthase (523 aa).

A molybdenum cofactor biosynthesis protein-like region spans residues A20–I111. Residues Q332 to K489 are FAD synthase.

It in the N-terminal section; belongs to the MoaB/Mog family. The protein in the C-terminal section; belongs to the PAPS reductase family. FAD1 subfamily. Mg(2+) serves as cofactor.

It catalyses the reaction FMN + ATP + H(+) = FAD + diphosphate. It participates in cofactor biosynthesis; FAD biosynthesis; FAD from FMN: step 1/1. Functionally, catalyzes the adenylation of flavin mononucleotide (FMN) to form flavin adenine dinucleotide (FAD) coenzyme. This Caenorhabditis briggsae protein is Probable FAD synthase.